The following is a 275-amino-acid chain: F-box only protein 50 (275 aa).

The disordered stretch occupies residues 1–67 (MEEVREGHAL…LPEPAQPSEA (67 aa)). A compositionally biased stretch (pro residues) spans 26–62 (PPSPRSPSPPPSPPPLPSPPSLPSPAAPEAPELPEPA). Phosphoserine is present on residues serine 31, serine 37, and serine 49. An FBA domain is found at 95 to 273 (LLLRRPLYRN…VTDSSVSVQL (179 aa)).

Expressed in the esophagus, oral cavity, skin, tongue and reproductive organs.

The protein resides in the cytoplasm. Its function is as follows. Promotes cell proliferation. The polypeptide is F-box only protein 50 (NCCRP1) (Homo sapiens (Human)).